The sequence spans 249 residues: Uridylate kinase (249 aa).

Position 13–16 (13–16 (KLSG)) interacts with ATP. Residue Gly-55 coordinates UMP. The ATP site is built by Gly-56 and Arg-60. UMP contacts are provided by residues Asp-75 and 136 to 143 (IGNPFFTT). ATP is bound by residues Thr-163, Phe-169, and Asp-172.

The protein belongs to the UMP kinase family. In terms of assembly, homohexamer.

Its subcellular location is the cytoplasm. The enzyme catalyses UMP + ATP = UDP + ADP. It functions in the pathway pyrimidine metabolism; CTP biosynthesis via de novo pathway; UDP from UMP (UMPK route): step 1/1. Its activity is regulated as follows. Inhibited by UTP. Its function is as follows. Catalyzes the reversible phosphorylation of UMP to UDP. The polypeptide is Uridylate kinase (Baumannia cicadellinicola subsp. Homalodisca coagulata).